The chain runs to 92 residues: MAYRGQGQKVQKVMVQPINLIFRYLQNRSRIQVWLYEQVNMRIEGCIIGFDEYMNLVLDDAEEIHSKTKSRKQLGRIMLKGDNITLLQSVSN.

The 75-residue stretch at isoleucine 18–asparagine 92 folds into the Sm domain.

This sequence belongs to the snRNP Sm proteins family. In terms of assembly, core component of the spliceosomal U1, U2, U4 and U5 small nuclear ribonucleoproteins (snRNPs), the building blocks of the spliceosome. Most spliceosomal snRNPs contain a common set of Sm proteins, SNRPB, SNRPD1, SNRPD2, SNRPD3, SNRPE, SNRPF and SNRPG that assemble in a heptameric protein ring on the Sm site of the small nuclear RNA to form the core snRNP. Component of the U1 snRNP. The U1 snRNP is composed of the U1 snRNA and the 7 core Sm proteins SNRPB, SNRPD1, SNRPD2, SNRPD3, SNRPE, SNRPF and SNRPG, and at least three U1 snRNP-specific proteins SNRNP70/U1-70K, SNRPA/U1-A and SNRPC/U1-C. Component of the U4/U6-U5 tri-snRNP complex composed of the U4, U6 and U5 snRNAs and at least PRPF3, PRPF4, PRPF6, PRPF8, PRPF31, SNRNP200, TXNL4A, SNRNP40, SNRPB, SNRPD1, SNRPD2, SNRPD3, SNRPE, SNRPF, SNRPG, DDX23, CD2BP2, PPIH, SNU13, EFTUD2, SART1 and USP39, plus LSM2, LSM3, LSM4, LSM5, LSM6, LSM7 and LSM8. Component of the U7 snRNP complex, or U7 Sm protein core complex, that is composed of the U7 snRNA and at least LSM10, LSM11, SNRPB, SNRPD3, SNRPE, SNRPF and SNRPG; the complex does not contain SNRPD1 and SNRPD2. Component of the minor spliceosome, which splices U12-type introns. Part of the SMN-Sm complex that contains SMN1, GEMIN2/SIP1, DDX20/GEMIN3, GEMIN4, GEMIN5, GEMIN6, GEMIN7, GEMIN8, STRAP/UNRIP and the Sm proteins SNRPB, SNRPD1, SNRPD2, SNRPD3, SNRPE, SNRPF and SNRPG; catalyzes core snRNPs assembly. Forms a 6S pICln-Sm complex composed of CLNS1A/pICln, SNRPD1, SNRPD2, SNRPE, SNRPF and SNRPG; ring-like structure where CLNS1A/pICln mimics additional Sm proteins and which is unable to assemble into the core snRNP. Interacts with SMN1; the interaction is direct. Interacts with GEMIN2 (via N-terminus); the interaction is direct. Interacts with SNRPF; the interaction is direct. Interacts with SNRPG; the interaction is direct.

Its subcellular location is the cytoplasm. The protein localises to the cytosol. The protein resides in the nucleus. In terms of biological role, plays a role in pre-mRNA splicing as a core component of the spliceosomal U1, U2, U4 and U5 small nuclear ribonucleoproteins (snRNPs), the building blocks of the spliceosome. Component of both the pre-catalytic spliceosome B complex and activated spliceosome C complexes. As a component of the minor spliceosome, involved in the splicing of U12-type introns in pre-mRNAs. As part of the U7 snRNP it is involved in histone 3'-end processing. The sequence is that of Small nuclear ribonucleoprotein E (SNRPE) from Bos taurus (Bovine).